Consider the following 770-residue polypeptide: POU domain, class 2, transcription factor 1 (770 aa).

The span at 1–26 (MNNPSETNKSSMESEDASTGTQTNGL) shows a compositional bias: polar residues. Disordered stretches follow at residues 1–33 (MNNP…KQPV), 68–97 (LNVQ…VQSA), 262–285 (VQTL…EPSD), and 357–385 (LSSD…RRKK). The segment covering 80 to 97 (DSQQSSQPSSQPPSVQSA) has biased composition (low complexity). Polar residues predominate over residues 262-272 (VQTLPQSQSTP). T271 and T277 each carry phosphothreonine. One can recognise a POU-specific domain in the interval 281 to 355 (EEPSDLEELE…LLEKWLNDAE (75 aa)). The residue at position 284 (S284) is a Phosphoserine. The span at 357–372 (LSSDSTASSPSALNSP) shows a compositional bias: low complexity. The segment at residues 382-441 (RRKKRTSIETNIRVALEKSFMENQKPTSEDITLIAEQLNMEKEVIRVWFCNRRQKEKRIN) is a DNA-binding region (homeobox). Phosphoserine occurs at positions 388 and 451. The span at 519–580 (TTTAGTTDST…TNTTQTTSTP (62 aa)) shows a compositional bias: low complexity. The tract at residues 519–589 (TTTAGTTDST…PLPSPLGASQ (71 aa)) is disordered.

Belongs to the POU transcription factor family. Class-2 subfamily. As to quaternary structure, interacts with POU2AF1; the interaction increases POU2F1 transactivation activity. Interacts with NR3C1, AR, PGR and HCFC1. Phosphorylated by PRKDC. As to expression, ubiquitously expressed. However, isoforms 4 and 5 are only expressed in lymphocytes.

It localises to the nucleus. In terms of biological role, transcription factor that binds to the octamer motif (5'-ATTTGCAT-3') and activates the promoters of the genes for some small nuclear RNAs (snRNA) and of genes such as those for histone H2B and immunoglobulins. Modulates transcription transactivation by NR3C1, AR and PGR. This chain is POU domain, class 2, transcription factor 1 (Pou2f1), found in Mus musculus (Mouse).